Consider the following 417-residue polypeptide: FK506-binding protein 3 (417 aa).

Disordered regions lie at residues S42–E129 and E191–K307. Acidic residues-rich tracts occupy residues F61–E84, S99–E120, and C197–D222. 2 stretches are compositionally biased toward basic and acidic residues: residues A236–A249 and D256–K307. The region spanning G331 to K417 is the PPIase FKBP-type domain.

It belongs to the FKBP-type PPIase family. FKBP3/4 subfamily.

The protein localises to the nucleus. Its subcellular location is the nucleolus. It catalyses the reaction [protein]-peptidylproline (omega=180) = [protein]-peptidylproline (omega=0). With respect to regulation, inhibited by both FK506 and rapamycin. Its function is as follows. PPIases accelerate the folding of proteins. It catalyzes the cis-trans isomerization of proline imidic peptide bonds in oligopeptides. The chain is FK506-binding protein 3 (FPR3) from Eremothecium gossypii (strain ATCC 10895 / CBS 109.51 / FGSC 9923 / NRRL Y-1056) (Yeast).